A 537-amino-acid polypeptide reads, in one-letter code: MARLLKAVTVCALAGIAHAFNYDQPYRGQYHFSPQKNWMNDPNGLLYHNGTYHLFFQYNPGGIEWGNISWGHATSEDLTHWEEQPVALLARGYGSDVTEMYFSGSAVADVNNTSGFGKDGKTPLVAMYTSYYPVAQTLPSGQTVQEDQQSQSIAYSLDDGLTWTTYDAANPVIPNPPQPYQAQYQNFRDPFVFWHDESQKWVVVTSIAELHKLAIYTSDNLKDWKLVSEFGPYNAQGGVWECPGLFKLPLDGGSSTKWVITSGLNPGGPPGTVGSGTQYFVGEFDGTTFTPDADTVYPGNSTANWMDWGPDFYAAAGYNGLSIKDHVHIGWMNNWQYGANIPTYPWRSAMAIPRHLALKTINNKTTLVQQPQEAWSSISSKHPLYSRTYSTFSEGSTNASTTGETFRVDLSFSATSKASTFAIALRASANFTEQTLAGYDFAKQQIFLDRTKSGDVSFDNTFASVYHGPLVPDSTSMVRLSIFVDRSSVEVFGGQGETSLTAQIFPSNDAVHARLVSTGGATEDVRVDVHNITSTWN.

An N-terminal signal peptide occupies residues 1 to 19; that stretch reads MARLLKAVTVCALAGIAHA. Aspartate 41 is a catalytic residue. N-linked (GlcNAc...) asparagine glycans are attached at residues asparagine 49, asparagine 67, asparagine 112, asparagine 300, asparagine 363, asparagine 398, asparagine 430, and asparagine 531.

Belongs to the glycosyl hydrolase 32 family.

Its subcellular location is the secreted. It catalyses the reaction Hydrolysis of terminal, non-reducing (2-&gt;1)- and (2-&gt;6)-linked beta-D-fructofuranose residues in fructans.. In terms of biological role, exo-inulinase involved in utilization of the plant storage polymer inulin, consisting of fructooligosaccharides with a degree of polymerization (DP) value from 2 to 60. Splits off terminal fructose units successively from the non-reducing end of the inulin molecule, and also hydrolyze sucrose and raffinose. This chain is Extracellular exo-inulinase inuE (inuE), found in Aspergillus niger (strain ATCC MYA-4892 / CBS 513.88 / FGSC A1513).